Reading from the N-terminus, the 307-residue chain is Ethylmalonyl-CoA decarboxylase (307 aa).

Ala2 is subject to N-acetylalanine. Lys217 bears the N6-acetyllysine; alternate mark. At Lys217 the chain carries N6-succinyllysine; alternate. Lys301 bears the N6-succinyllysine mark.

It belongs to the enoyl-CoA hydratase/isomerase family.

It localises to the cytoplasm. The protein resides in the cytosol. The catalysed reaction is (2S)-ethylmalonyl-CoA + H(+) = butanoyl-CoA + CO2. It catalyses the reaction (S)-methylmalonyl-CoA + H(+) = propanoyl-CoA + CO2. The enzyme catalyses (2R)-ethylmalonyl-CoA + H(+) = butanoyl-CoA + CO2. In terms of biological role, decarboxylates ethylmalonyl-CoA, a potentially toxic metabolite, to form butyryl-CoA, suggesting it might be involved in metabolite proofreading. Acts preferentially on (S)-ethylmalonyl-CoA but also has some activity on the (R)-isomer. Also has methylmalonyl-CoA decarboxylase activity at lower level. The chain is Ethylmalonyl-CoA decarboxylase (ECHDC1) from Homo sapiens (Human).